The primary structure comprises 375 residues: Fructose-1,6-bisphosphate aldolase/phosphatase (375 aa).

The active-site Proton acceptor; for FBP phosphatase activity is the D15. Mg(2+)-binding residues include D15, H22, D56, and D57. Residue H22 participates in beta-D-fructose 1,6-bisphosphate binding. A dihydroxyacetone phosphate-binding site is contributed by H22. Beta-D-fructose 1,6-bisphosphate is bound at residue Y94. Position 98 (Q98) interacts with Mg(2+). 107–108 contributes to the beta-D-fructose 1,6-bisphosphate binding site; that stretch reads GN. Mg(2+) is bound at residue D135. K136 contributes to the beta-D-fructose 1,6-bisphosphate binding site. K136 contributes to the dihydroxyacetone phosphate binding site. The active-site Proton donor/acceptor; for FBP aldolase activity is the Y237. Positions 240, 241, and 242 each coordinate Mg(2+). K240 functions as the Schiff-base intermediate with DHAP; for FBP aldolase activity in the catalytic mechanism. Residues 250-251, R274, D295, and Y357 each bind beta-D-fructose 1,6-bisphosphate; that span reads QS. Residues R274 and D295 each coordinate dihydroxyacetone phosphate.

The protein belongs to the FBP aldolase/phosphatase family. In terms of assembly, homooctamer; dimer of tetramers. Mg(2+) is required as a cofactor.

The enzyme catalyses beta-D-fructose 1,6-bisphosphate = D-glyceraldehyde 3-phosphate + dihydroxyacetone phosphate. It carries out the reaction beta-D-fructose 1,6-bisphosphate + H2O = beta-D-fructose 6-phosphate + phosphate. It participates in carbohydrate biosynthesis; gluconeogenesis. Its activity is regulated as follows. FBPase activity is inhibited by Ca(2+), ATP, ADP and phosphoenolpyruvate. In terms of biological role, catalyzes two subsequent steps in gluconeogenesis: the aldol condensation of dihydroxyacetone phosphate (DHAP) and glyceraldehyde-3-phosphate (GA3P) to fructose-1,6-bisphosphate (FBP), and the dephosphorylation of FBP to fructose-6-phosphate (F6P). Can also dephosphorylate, with lower activity, other related substrates including fructose-1-phosphate, fructose-6-phosphate, glucose-1-phosphate, glucose-6-phosphate, glycerol-2-phosphate, phosphoenolpyruvate, 5'-AMP, 6'-ADP and 7'-ATP. The sequence is that of Fructose-1,6-bisphosphate aldolase/phosphatase from Thermococcus onnurineus (strain NA1).